The sequence spans 152 residues: SUZ RNA-binding domain-containing (152 aa).

At M1 the chain carries N-acetylmethionine. A disordered region spans residues 30 to 152; the sequence is TQKESRKSKS…DGSQGFKQRR (123 aa). 3 positions are modified to phosphoserine: S37, S39, and S51. In terms of domain architecture, SUZ spans 42-107; that stretch reads KVPIVIQDDS…ARKRILGSAS (66 aa). Over residues 66-81 the composition is skewed to polar residues; sequence PTSNGVVSSPNSTSRP. The span at 89–100 shows a compositional bias: basic and acidic residues; the sequence is AQREAEYAEARK. Phosphoserine is present on residues S105 and S107. The 42-residue stretch at 111-152 folds into the SUZ-C domain; the sequence is EQEKPILDRPTRISQPEDSRQPNNVIRQPLGPDGSQGFKQRR. Residues 113 to 130 show a composition bias toward basic and acidic residues; the sequence is EKPILDRPTRISQPEDSR.

It belongs to the SZRD1 family.

The chain is SUZ RNA-binding domain-containing (SZRD1) from Homo sapiens (Human).